We begin with the raw amino-acid sequence, 198 residues long: Glycerol-3-phosphate acyltransferase (198 aa).

Helical transmembrane passes span 5–25 (LILL…LWIG), 56–76 (SIVT…PFFF), 84–104 (FWLL…FAGF), 114–134 (AGVI…VFLV), and 158–178 (LFMG…FVIW).

This sequence belongs to the PlsY family. Probably interacts with PlsX.

The protein resides in the cell membrane. It catalyses the reaction an acyl phosphate + sn-glycerol 3-phosphate = a 1-acyl-sn-glycero-3-phosphate + phosphate. The protein operates within lipid metabolism; phospholipid metabolism. Its function is as follows. Catalyzes the transfer of an acyl group from acyl-phosphate (acyl-PO(4)) to glycerol-3-phosphate (G3P) to form lysophosphatidic acid (LPA). This enzyme utilizes acyl-phosphate as fatty acyl donor, but not acyl-CoA or acyl-ACP. The chain is Glycerol-3-phosphate acyltransferase from Listeria monocytogenes serovar 1/2a (strain ATCC BAA-679 / EGD-e).